Here is a 179-residue protein sequence, read N- to C-terminus: Nucleoside-triphosphatase THEP1 (179 aa).

ATP is bound by residues 7-14 and 94-101; these read GRPGVGKT and LIIVDEIG.

This sequence belongs to the THEP1 NTPase family.

It catalyses the reaction a ribonucleoside 5'-triphosphate + H2O = a ribonucleoside 5'-diphosphate + phosphate + H(+). Functionally, has nucleotide phosphatase activity towards ATP, GTP, CTP, TTP and UTP. May hydrolyze nucleoside diphosphates with lower efficiency. This Thermotoga petrophila (strain ATCC BAA-488 / DSM 13995 / JCM 10881 / RKU-1) protein is Nucleoside-triphosphatase THEP1.